The following is a 268-amino-acid chain: tRNA pseudouridine synthase A (268 aa).

Asp-54 (nucleophile) is an active-site residue. Tyr-112 contributes to the substrate binding site.

Belongs to the tRNA pseudouridine synthase TruA family. In terms of assembly, homodimer.

It carries out the reaction uridine(38/39/40) in tRNA = pseudouridine(38/39/40) in tRNA. Its function is as follows. Formation of pseudouridine at positions 38, 39 and 40 in the anticodon stem and loop of transfer RNAs. This is tRNA pseudouridine synthase A from Bordetella petrii (strain ATCC BAA-461 / DSM 12804 / CCUG 43448).